The sequence spans 220 residues: Protein ABA DEFICIENT 4, chloroplastic (220 aa).

The N-terminal 37 residues, 1-37 (MGFSSFISQPLSSSLSVMKRNVSAKRSELCLDSSKIR), are a transit peptide targeting the chloroplast. Transmembrane regions (helical) follow at residues 77 to 97 (IASSVFAVGTTAVLPFYTLMV), 112 to 132 (SVPYIILGVLYVYLLYISWTP), 154 to 174 (MFSSEMTLASAWIHLLVVDLF), and 195 to 215 (SLCLLFCPVGIVSHFVTKAII).

As to expression, expressed in root vasculature, root hairs, leaves, trichomes, sepals, stamens, stigma, pedicels, siliques and embryo.

The protein resides in the plastid. Its subcellular location is the chloroplast membrane. In terms of biological role, required for neoxanthin biosynthesis, an intermediary step in abscisic acid (ABA) biosynthesis. Probably not involved directly in the enzymatic conversion of violaxanthin to neoxanthin. Cannot convert violaxanthin to neoxanthin in vitro. Required for ABA biosynthesis in response to drought stress. Required for neoxanthin biosynthesis which is involved in photoprotection of photosystem II (PSII). Neoxanthin acts as an antioxidant within the photosystem PSII supercomplex. In Arabidopsis thaliana (Mouse-ear cress), this protein is Protein ABA DEFICIENT 4, chloroplastic.